The sequence spans 536 residues: Austinoid biosynthesis cluster protein W (536 aa).

The first 19 residues, 1–19 (MKHPTVALLGVGMLGCAAA), serve as a signal peptide directing secretion. 5 disordered regions span residues 141–164 (GSAP…PGFP), 185–220 (SLPG…PGFS), 261–302 (FGVP…ASNG), 385–423 (PGSA…ASNG), and 491–536 (PSPT…SSAE). The segment covering 195-208 (SGPSQAAAAPSTGD) has biased composition (low complexity). Residues 209 to 220 (SGSGLPGSPGFS) are compositionally biased toward gly residues. Low complexity-rich tracts occupy residues 287–302 (AGNA…ASNG) and 408–423 (AGNA…ASNG).

It participates in secondary metabolite biosynthesis; terpenoid biosynthesis. Part of the gene cluster that mediates the biosynthesis of calidodehydroaustin, a fungal meroterpenoid. The first step of the pathway is the synthesis of 3,5-dimethylorsellinic acid by the polyketide synthase ausA. 3,5-dimethylorsellinic acid is then prenylated by the polyprenyl transferase ausN. Further epoxidation by the FAD-dependent monooxygenase ausM and cyclization by the probable terpene cyclase ausL lead to the formation of protoaustinoid A. Protoaustinoid A is then oxidized to spiro-lactone preaustinoid A3 by the combined action of the FAD-binding monooxygenases ausB and ausC, and the dioxygenase ausE. Acid-catalyzed keto-rearrangement and ring contraction of the tetraketide portion of preaustinoid A3 by ausJ lead to the formation of preaustinoid A4. The aldo-keto reductase ausK, with the help of ausH, is involved in the next step by transforming preaustinoid A4 into isoaustinone which is in turn hydroxylated by the P450 monooxygenase ausI to form austinolide. The cytochrome P450 monooxygenase ausG modifies austinolide to austinol. Austinol is further acetylated to austin by the O-acetyltransferase ausP, which spontaneously changes to dehydroaustin. The cytochrome P450 monooxygenase ausR then converts dehydroaustin is into 7-dehydrodehydroaustin. The hydroxylation catalyzed by ausR permits the O-acetyltransferase ausQ to add an additional acetyl group to the molecule, leading to the formation of acetoxydehydroaustin. The short chain dehydrogenase ausT catalyzes the reduction of the double bond present between carbon atoms 1 and 2 to convert 7-dehydrodehydroaustin into 1,2-dihydro-7-hydroxydehydroaustin. AusQ catalyzes not only an acetylation reaction but also the addition of the PKS ausV diketide product to 1,2-dihydro-7-hydroxydehydroaustin, forming precalidodehydroaustin. Finally, the iron/alpha-ketoglutarate-dependent dioxygenase converts precalidodehydroaustin into calidodehydroaustin. The chain is Austinoid biosynthesis cluster protein W from Aspergillus calidoustus.